The following is a 286-amino-acid chain: Pyridoxal kinase PdxY (286 aa).

Residues Ser-9 and 44–45 (TQ) contribute to the substrate site. 3 residues coordinate ATP: Asp-111, Glu-148, and Lys-181. A substrate-binding site is contributed by Asp-222.

It belongs to the pyridoxine kinase family. PdxY subfamily. As to quaternary structure, homodimer. Mg(2+) serves as cofactor.

The catalysed reaction is pyridoxal + ATP = pyridoxal 5'-phosphate + ADP + H(+). It functions in the pathway cofactor metabolism; pyridoxal 5'-phosphate salvage; pyridoxal 5'-phosphate from pyridoxal: step 1/1. Its function is as follows. Pyridoxal kinase involved in the salvage pathway of pyridoxal 5'-phosphate (PLP). Catalyzes the phosphorylation of pyridoxal to PLP. The chain is Pyridoxal kinase PdxY from Actinobacillus pleuropneumoniae serotype 5b (strain L20).